The primary structure comprises 230 residues: Octanoyltransferase (230 aa).

Residues 38–215 (AGGADTLLLL…AVCAALDGVL (178 aa)) form the BPL/LPL catalytic domain. Substrate contacts are provided by residues 76–83 (RGGKITWH), 145–147 (AIG), and 158–160 (GFA). Catalysis depends on cysteine 176, which acts as the Acyl-thioester intermediate.

This sequence belongs to the LipB family.

It is found in the cytoplasm. It catalyses the reaction octanoyl-[ACP] + L-lysyl-[protein] = N(6)-octanoyl-L-lysyl-[protein] + holo-[ACP] + H(+). The protein operates within protein modification; protein lipoylation via endogenous pathway; protein N(6)-(lipoyl)lysine from octanoyl-[acyl-carrier-protein]: step 1/2. Its function is as follows. Catalyzes the transfer of endogenously produced octanoic acid from octanoyl-acyl-carrier-protein onto the lipoyl domains of lipoate-dependent enzymes. Lipoyl-ACP can also act as a substrate although octanoyl-ACP is likely to be the physiological substrate. In Mycobacterium bovis (strain BCG / Tokyo 172 / ATCC 35737 / TMC 1019), this protein is Octanoyltransferase.